The primary structure comprises 473 residues: Dynein axonemal assembly factor 11 (473 aa).

LRR repeat units lie at residues 22–43 (SLEE…DKWC), 45–66 (DLKI…SKLK), 67–88 (KLEY…EGCE), and 89–110 (WLTK…KTLT). The LRRCT domain occupies 123 to 161 (NPCADFDGYRQFVVVTLQQLKWLDGKEIERSERIQALQN). A coiled-coil region spans residues 153-205 (SERIQALQNYTSVEQQIREQEKAYCLRRAKEKEEAQRKLEEENESEDKKKSST). Basic and acidic residues-rich tracts occupy residues 188 to 202 (QRKL…DKKK) and 273 to 283 (EKQRKAQDKLS). Disordered regions lie at residues 188-244 (QRKL…TKES), 273-292 (EKQR…AKPP), and 387-473 (VGEM…PPLI). Residues 305–402 (VNEAKLDFSL…GGQRTPTSVK (98 aa)) enclose the CS domain. Residues 397 to 408 (TPTSVKTTSTSS) show a composition bias toward low complexity. Residues 417–431 (KQIERLEVDPSKHSC) show a composition bias toward basic and acidic residues. The segment covering 456–467 (PSEEDPDFEDNP) has biased composition (acidic residues).

This sequence belongs to the tilB family. As to quaternary structure, interacts (via CS domain) with ZMYND10 (via C-terminus). In terms of tissue distribution, mainly expressed in cells with motile cilia. Expressed in epithelial cells of the trachea, testis and ependymal cells of the cerebral ventricles. In testis, abundant expression in late prophase of meiosis I with a dramatic decrease after the first meiotic division (at protein level).

The protein resides in the cytoplasm. The protein localises to the cell projection. It localises to the cilium. It is found in the dynein axonemal particle. Its subcellular location is the flagellum. Functionally, involved in dynein arm assembly, is important for expression and transporting outer dynein arm (ODA) proteins from the cytoplasm to the cilia. Acts as a crucial component in the formation and motility of spermatozoal flagella. The protein is Dynein axonemal assembly factor 11 (Dnaaf11) of Mus musculus (Mouse).